We begin with the raw amino-acid sequence, 256 residues long: HTH-type transcriptional regulator PrtR (256 aa).

The region spanning 16–69 is the HTH cro/C1-type domain; that stretch reads LKQAMAMRNLKQETLAEAAGVSQNTIHKLTSGKAQSTRKLIEIAAALGVSPVWL. Residues 27–46 constitute a DNA-binding region (H-T-H motif); it reads QETLAEAAGVSQNTIHKLTS.

Represses the promoter activity of the prtN gene. This chain is HTH-type transcriptional regulator PrtR (prtR), found in Pseudomonas aeruginosa (strain ATCC 15692 / DSM 22644 / CIP 104116 / JCM 14847 / LMG 12228 / 1C / PRS 101 / PAO1).